Reading from the N-terminus, the 344-residue chain is Probable magnesium transporter NIPA9 (344 aa).

Residues 1 to 46 (MWESICLTLAATAGNNIGKVLQKKGTIILPPLSLKLKVLRAYAENK) lie on the Cytoplasmic side of the membrane. Transmembrane regions (helical) follow at residues 47–67 (PWAL…RALS) and 68–88 (LAPV…LSVF). Topologically, residues 89 to 98 (SHFYLKEVMN) are cytoplasmic. The chain crosses the membrane as a helical span at residues 99 to 119 (VFDWIGITVAGIGTIGVGAGG). The Extracellular segment spans residues 120-125 (EEQEAS). The chain crosses the membrane as a helical span at residues 126-146 (LISVFQLLWLALVVAILFVLL). At 147–166 (NAWLHIFKRQRREQELGEYE) the chain is on the cytoplasmic side. Residues 167 to 187 (VVEEIIYGLESGILFGMASVV) form a helical membrane-spanning segment. The Extracellular portion of the chain corresponds to 188–191 (SKMG). The chain crosses the membrane as a helical span at residues 192-212 (FVFVEQGFSTMFIPMCISISI). Over 213–231 (CCSGTGFFYQTRGLKHGRA) the chain is Cytoplasmic. Residues 232–252 (IVVSTCAAVASIVTGVVAGMF) form a helical membrane-spanning segment. The Extracellular portion of the chain corresponds to 253–265 (ALGEKLPTSPSGR). The helical transmembrane segment at 266 to 286 (LLLLLGWLLIMLGVVLLVTSS) threads the bilayer. Residues 287-344 (RLIRHLPRSFRRSRQTSLERGFNIRRTTSHTPKDTNPSAVIQAATLHHLLSSPSKDKD) are Cytoplasmic-facing.

The protein belongs to the NIPA (TC 2.A.7) family. In terms of assembly, homodimer.

The protein resides in the cell membrane. It is found in the early endosome. Its function is as follows. Acts as a Mg(2+) transporter. Can also transport other divalent cations such as Fe(2+), Sr(2+), Ba(2+), Mn(2+) and Co(2+) but to a much less extent than Mg(2+). The sequence is that of Probable magnesium transporter NIPA9 from Arabidopsis thaliana (Mouse-ear cress).